The sequence spans 144 residues: Glycophorin-A (144 aa).

Positions 1-25 are enriched in polar residues; it reads SSTTVPATHTSSSSLGPEQYVSSQS. A disordered region spans residues 1–55; that stretch reads SSTTVPATHTSSSSLGPEQYVSSQSNDKHTSDSHPTPTSAHEVTTEFSGRTHYPP. O-linked (GalNAc...) serine glycosylation occurs at serine 2. Threonine 3, threonine 4, threonine 8, and threonine 10 each carry an O-linked (GalNAc...) threonine glycan. Serine 11, serine 12, serine 13, serine 14, serine 22, and serine 23 each carry an O-linked (GalNAc...) serine glycan. Threonine 30, threonine 36, threonine 38, threonine 44, and threonine 45 each carry an O-linked (GalNAc...) threonine glycan. Polar residues predominate over residues 33-48; it reads SHPTPTSAHEVTTEFS. O-linked (GalNAc...) serine glycosylation is present at serine 48. Threonine 51 carries an O-linked (GalNAc...) threonine glycan. Residues 70–92 form a helical membrane-spanning segment; sequence LVIALIIFGVMAGVIGTILFISY. A disordered region spans residues 101–144; sequence SESDVQPLPPPDAEVPLSSVEIEDPEETDELNSFTKPNQERNES. Serine 118 carries the post-translational modification Phosphoserine. Over residues 121 to 130 the composition is skewed to acidic residues; that stretch reads EIEDPEETDE.

Belongs to the glycophorin-A family. Homodimer. Component of the ankyrin-1 complex in the erythrocyte, composed of ANK1, RHCE, RHAG, SLC4A1, EPB42, GYPA, GYPB and AQP1. Interacts with SLC4A1; a GYPA monomer is bound at each end of the SLC4A1 dimer forming a heterotetramer.

Its subcellular location is the membrane. Functionally, component of the ankyrin-1 complex, a multiprotein complex involved in the stability and shape of the erythrocyte membrane. Glycophorin A is the major intrinsic membrane protein of the erythrocyte. The N-terminal glycosylated segment, which lies outside the erythrocyte membrane, has MN blood group receptors. Appears to be important for the function of SLC4A1 and is required for high activity of SLC4A1. May be involved in translocation of SLC4A1 to the plasma membrane. The sequence is that of Glycophorin-A from Macaca fuscata fuscata (Japanese macaque).